The chain runs to 470 residues: MSKKYDAGVKEYRDTYWTPDYVPLDTDLLACFKCTGQEGVPKEEVAAAVAAESSTGTWSTVWSELLTDLDFYKGRCYRIEDVPGDKEAFYAFIAYPLDLFEEGSITNVLTSLVGNVFGFKALRHLRLEDIRFPIAFIKCCAGPPNGIAVERDRMNKYGRPLLGCTIKPKLGLSGKNYGRVVYECLRGGLDFTKDDENINSQPFQRWQNRFEFVAEAIKLAEQETGERKGHYLNVTANTPEEMYERAEFAKELNQPIIMHDFITGGFTANTGLSKWCRANGMLLHIHRAMHAVIDRHPKHGIHFRVLAKCLRLSGGDQLHTGTVVGKLEGDRQTTLGYIDQLRESFVPEDRSRGNFFDQDWGSMPGVFAVASGGIHVWHMPALVAIFGDDSVLQFGGGTHGHPWGSAAGAAANRVALEACVKARNAGREIEKESRDILMEAGKHSPELAIALETWKEIKFEFDTVDKLDVQ.

Substrate contacts are provided by asparagine 115 and threonine 165. Lysine 167 acts as the Proton acceptor in catalysis. Lysine 169 contributes to the substrate binding site. Mg(2+)-binding residues include lysine 193, aspartate 195, and glutamate 196. N6-carboxylysine is present on lysine 193. Histidine 286 functions as the Proton acceptor in the catalytic mechanism. Arginine 287, histidine 319, and serine 371 together coordinate substrate.

The protein belongs to the RuBisCO large chain family. Type I subfamily. In terms of assembly, heterohexadecamer of 8 large chains and 8 small chains. Requires Mg(2+) as cofactor.

Its subcellular location is the carboxysome. The catalysed reaction is 2 (2R)-3-phosphoglycerate + 2 H(+) = D-ribulose 1,5-bisphosphate + CO2 + H2O. It catalyses the reaction D-ribulose 1,5-bisphosphate + O2 = 2-phosphoglycolate + (2R)-3-phosphoglycerate + 2 H(+). Its function is as follows. RuBisCO catalyzes two reactions: the carboxylation of D-ribulose 1,5-bisphosphate, the primary event in carbon dioxide fixation, as well as the oxidative fragmentation of the pentose substrate in the photorespiration process. Both reactions occur simultaneously and in competition at the same active site. The protein is Ribulose bisphosphate carboxylase large chain of Synechococcus sp. (strain CC9902).